The primary structure comprises 688 residues: DNA-directed RNA polymerase subunit beta' (688 aa).

4 residues coordinate Zn(2+): Cys-69, Cys-71, Cys-87, and Cys-90. 3 residues coordinate Mg(2+): Asp-489, Asp-491, and Asp-493.

The protein belongs to the RNA polymerase beta' chain family. RpoC1 subfamily. In terms of assembly, in plastids the minimal PEP RNA polymerase catalytic core is composed of four subunits: alpha, beta, beta', and beta''. When a (nuclear-encoded) sigma factor is associated with the core the holoenzyme is formed, which can initiate transcription. Mg(2+) serves as cofactor. Requires Zn(2+) as cofactor.

The protein localises to the plastid. The protein resides in the chloroplast. The enzyme catalyses RNA(n) + a ribonucleoside 5'-triphosphate = RNA(n+1) + diphosphate. Its function is as follows. DNA-dependent RNA polymerase catalyzes the transcription of DNA into RNA using the four ribonucleoside triphosphates as substrates. This Piper cenocladum (Ant piper) protein is DNA-directed RNA polymerase subunit beta'.